The chain runs to 43 residues: Protein PsbN (43 aa).

A helical membrane pass occupies residues threonine 5 to phenylalanine 27.

This sequence belongs to the PsbN family.

It is found in the plastid. The protein localises to the chloroplast thylakoid membrane. In terms of biological role, may play a role in photosystem I and II biogenesis. This is Protein PsbN from Drimys granadensis.